We begin with the raw amino-acid sequence, 280 residues long: Fructose-1,6-bisphosphatase class 1 (280 aa).

Mg(2+)-binding residues include E64, D83, L85, and D86. Residues 86 to 89 (DGSS), Y190, and K221 each bind substrate. Residue E227 coordinates Mg(2+).

The protein belongs to the FBPase class 1 family. In terms of assembly, homotetramer. It depends on Mg(2+) as a cofactor.

It localises to the cytoplasm. It carries out the reaction beta-D-fructose 1,6-bisphosphate + H2O = beta-D-fructose 6-phosphate + phosphate. Its pathway is carbohydrate biosynthesis; gluconeogenesis. This is Fructose-1,6-bisphosphatase class 1 from Campylobacter hominis (strain ATCC BAA-381 / DSM 21671 / CCUG 45161 / LMG 19568 / NCTC 13146 / CH001A).